A 364-amino-acid polypeptide reads, in one-letter code: tRNA-specific 2-thiouridylase MnmA 1 (364 aa).

ATP-binding positions include 10–17 (GMSGGVDS) and Met36. Catalysis depends on Cys106, which acts as the Nucleophile. Cys106 and Cys204 form a disulfide bridge. Gly130 provides a ligand contact to ATP. The segment at 154–156 (KDQ) is interaction with tRNA. Cys204 functions as the Cysteine persulfide intermediate in the catalytic mechanism. The interval 310–311 (RY) is interaction with tRNA.

This sequence belongs to the MnmA/TRMU family.

Its subcellular location is the cytoplasm. The enzyme catalyses S-sulfanyl-L-cysteinyl-[protein] + uridine(34) in tRNA + AH2 + ATP = 2-thiouridine(34) in tRNA + L-cysteinyl-[protein] + A + AMP + diphosphate + H(+). In terms of biological role, catalyzes the 2-thiolation of uridine at the wobble position (U34) of tRNA, leading to the formation of s(2)U34. This is tRNA-specific 2-thiouridylase MnmA 1 from Thermoanaerobacter pseudethanolicus (strain ATCC 33223 / 39E) (Clostridium thermohydrosulfuricum).